Consider the following 128-residue polypeptide: KHDC1-like protein (128 aa).

It belongs to the KHDC1 family.

The polypeptide is KHDC1-like protein (KHDC1L) (Homo sapiens (Human)).